A 544-amino-acid chain; its full sequence is Protein anon-37Cs (544 aa).

The protein localises to the cytoplasm. In terms of biological role, has a non-vital function. The sequence is that of Protein anon-37Cs (anon-37Cs) from Drosophila lebanonensis (Fruit fly).